The following is a 793-amino-acid chain: MKVTPLMEQYLRIKEQYKDSILLFRLGDFYEAFFEDAKIVSKVLNIVLTRRQDAPMAGIPYHALNSYLKKLVEAGYKVAICDQMEEPSKSKKLIRREVTRVVTPGSILEDEFLSETNNYMAVVSEEKGQYCTIFCDVSTGEVLVHESSDEQETMDLLKNYSISQIVCPDHLKPSLKERFPGVYTESISEWYFSDLEEVEKAYNLKDIHHFELSSLALKTLAALIKYVKYTMITEELNLKPPLLISQRDYMILDSATVENLSLIPGDRGKNLFDVLNNTETPMGARLLKKWILHPLVDRKQIEERLETVEKLVSDRMNLEELRDLLSNVRDVERIVSRVEYNRSVPRDLVALRETLEIIPKLNEILSTFGVFKNLAFPERLLDLLQRAVEDDPAGSPGEGKVIKRGFSPELDEYRDLLEHAEERLKEFEEKERKRTGIQKLKVGYNQVFGYYIEVTKANLDKIPDDYERKQTLVNSERFITPELKEFETKIMAAKERIEELEKELFKNVCEEVKKHKEILLKISEELAKIDVLSTLAYDAILYSYTKPIFSEGRLEIKGGRHPIVERFTQNFVENDIYMDNERRFVVITGPNMSGKSTFIRQVGLISLMAQIGSFVPAQKAILPVFDRIFTRMGARDDLAGGRSTFLVEMNEMALILLKSTEKSLVLLDEVGRGTSTQDGVSIAWAISEELIKRGCKVLFATHFTELTELEKHFPQVQNKTILVKEEGKNVIFTHKVVDGVADRSYGIEVAKIAGIPDRVINRAYEILERNFKNNTKKNGKSNRFSQQIPLFPV.

589 to 596 contacts ATP; sequence GPNMSGKS.

Belongs to the DNA mismatch repair MutS family.

Its function is as follows. This protein is involved in the repair of mismatches in DNA. It is possible that it carries out the mismatch recognition step. This protein has a weak ATPase activity. The polypeptide is DNA mismatch repair protein MutS (Thermotoga petrophila (strain ATCC BAA-488 / DSM 13995 / JCM 10881 / RKU-1)).